The following is a 257-amino-acid chain: Protein TONNEAU 1b (257 aa).

Positions 73 to 105 (SGRLLSALICEYLDWAQLNHTLKVYQPECNSAK) constitute a LisH domain. 2 disordered regions span residues 148 to 216 (QVMG…EDMP) and 231 to 257 (LDRK…EGKD). The span at 187–199 (SVSASQASGAATS) shows a compositional bias: low complexity. Composition is skewed to basic and acidic residues over residues 201–212 (YRKDESNWRYDT) and 244–257 (NVKD…EGKD).

As to quaternary structure, interacts with CEN1, LNG1/TRM2 and LNG2/TRM1 (via C-terminus).

The protein resides in the cytoplasm. It is found in the cytoskeleton. Functionally, involved in the control of the dynamic organization of the cortical cytoskeleton. May play a role in the organization of microtubule arrays at the centrosome through interaction with centrin 1 (CEN1). This chain is Protein TONNEAU 1b (TON1B), found in Arabidopsis thaliana (Mouse-ear cress).